Here is a 254-residue protein sequence, read N- to C-terminus: Short-chain dehydrogenase/reductase SDRA (254 aa).

Position 15-39 (15-39 (IVTASTQGIGFGITERFGLEGASVV)) interacts with NADP(+). A substrate-binding site is contributed by S146. Residue Y159 is the Proton acceptor of the active site. A Microbody targeting signal motif is present at residues 252-254 (SRL).

Belongs to the short-chain dehydrogenases/reductases (SDR) family.

Its subcellular location is the peroxisome. Involved with IBR3 and IBR10 in the peroxisomal beta-oxidation of indole-3-butyric acid (IBA) to form indole-3-acetic acid (IAA), a biologically active auxin. May be responsible for catalyzing the dehydrogenation step in the conversion of IBA. May be involved in the peroxisomal activation of 2,4-dichlorophenoxybutyric acid (2,4-DB), a precursor of active auxins that inhibit root growth. In Arabidopsis thaliana (Mouse-ear cress), this protein is Short-chain dehydrogenase/reductase SDRA.